Consider the following 84-residue polypeptide: Small ribosomal subunit protein eS27z (84 aa).

The C4-type zinc-finger motif lies at 39–61 (CQGCFNITTVFSHSQTVVMCGNC).

It belongs to the eukaryotic ribosomal protein eS27 family. As to quaternary structure, (Microbial infection) May interact with Tomato yellow leaf curl virus (TYLCV) and papaya leaf curl China virus (PaLcuCNV) C2 proteins. This interaction prevents activation of Jasmonate signaling, thereby facilitating viral uptake by insects vectors. Zn(2+) serves as cofactor.

The sequence is that of Small ribosomal subunit protein eS27z (RPS27A) from Arabidopsis thaliana (Mouse-ear cress).